The following is a 265-amino-acid chain: Tryptophan synthase alpha chain (265 aa).

Active-site proton acceptor residues include Glu49 and Asp60.

Belongs to the TrpA family. Tetramer of two alpha and two beta chains.

The enzyme catalyses (1S,2R)-1-C-(indol-3-yl)glycerol 3-phosphate + L-serine = D-glyceraldehyde 3-phosphate + L-tryptophan + H2O. The protein operates within amino-acid biosynthesis; L-tryptophan biosynthesis; L-tryptophan from chorismate: step 5/5. Functionally, the alpha subunit is responsible for the aldol cleavage of indoleglycerol phosphate to indole and glyceraldehyde 3-phosphate. The polypeptide is Tryptophan synthase alpha chain (Desulfatibacillum aliphaticivorans).